The primary structure comprises 396 residues: Elongation factor Tu 1 (396 aa).

The 197-residue stretch at 10-206 (KPHCNIGTIG…AVDAYIPQPE (197 aa)) folds into the tr-type G domain. The tract at residues 19–26 (GHVDHGKT) is G1. 19–26 (GHVDHGKT) contributes to the GTP binding site. T26 contacts Mg(2+). The G2 stretch occupies residues 60 to 64 (GITIS). Residues 81-84 (DCPG) form a G3 region. GTP contacts are provided by residues 81-85 (DCPGH) and 136-139 (NKCD). Residues 136 to 139 (NKCD) form a G4 region. A G5 region spans residues 174-176 (SAL).

It belongs to the TRAFAC class translation factor GTPase superfamily. Classic translation factor GTPase family. EF-Tu/EF-1A subfamily. Monomer.

It is found in the cytoplasm. The catalysed reaction is GTP + H2O = GDP + phosphate + H(+). GTP hydrolase that promotes the GTP-dependent binding of aminoacyl-tRNA to the A-site of ribosomes during protein biosynthesis. This is Elongation factor Tu 1 from Rhodopseudomonas palustris (strain BisB5).